A 375-amino-acid chain; its full sequence is Succinyl-diaminopimelate desuccinylase (375 aa).

Residue His-66 participates in Zn(2+) binding. The active site involves Asp-68. Asp-99 provides a ligand contact to Zn(2+). Glu-133 serves as the catalytic Proton acceptor. Glu-134, Glu-162, and His-348 together coordinate Zn(2+).

The protein belongs to the peptidase M20A family. DapE subfamily. In terms of assembly, homodimer. Requires Zn(2+) as cofactor. It depends on Co(2+) as a cofactor.

The catalysed reaction is N-succinyl-(2S,6S)-2,6-diaminopimelate + H2O = (2S,6S)-2,6-diaminopimelate + succinate. Its pathway is amino-acid biosynthesis; L-lysine biosynthesis via DAP pathway; LL-2,6-diaminopimelate from (S)-tetrahydrodipicolinate (succinylase route): step 3/3. Its function is as follows. Catalyzes the hydrolysis of N-succinyl-L,L-diaminopimelic acid (SDAP), forming succinate and LL-2,6-diaminopimelate (DAP), an intermediate involved in the bacterial biosynthesis of lysine and meso-diaminopimelic acid, an essential component of bacterial cell walls. This is Succinyl-diaminopimelate desuccinylase from Shigella dysenteriae serotype 1 (strain Sd197).